We begin with the raw amino-acid sequence, 128 residues long: MQKRVRNRLITIIICFCSACLGISIILYNLEKNIVFFLPPSKINAIEQGKELRVGGLVKTDSINKIADDKISFVITDNIKDFEILYQGALPALFRKGQGIIAIGQLSNGKFIARQLLAKHDENYRPPQ.

Over 1-8 (MQKRVRNR) the chain is Cytoplasmic. A helical; Signal-anchor for type II membrane protein transmembrane segment spans residues 9-29 (LITIIICFCSACLGISIILYN). At 30-128 (LEKNIVFFLP…KHDENYRPPQ (99 aa)) the chain is on the periplasmic side. Heme is bound by residues His-120 and Tyr-124.

The protein belongs to the CcmE/CycJ family.

Its subcellular location is the cell inner membrane. In terms of biological role, heme chaperone required for the biogenesis of c-type cytochromes. Transiently binds heme delivered by CcmC and transfers the heme to apo-cytochromes in a process facilitated by CcmF and CcmH. The polypeptide is Cytochrome c-type biogenesis protein CcmE (Rickettsia peacockii (strain Rustic)).